We begin with the raw amino-acid sequence, 164 residues long: MKARELFEKLKKELNNFSIYDIMMIRSFIEKDAKYLPPQYKNHYVEAMMKYLIETFNEIRKKSVDEIQDEEIDEEKLNEMLNRIERFRKYYTPDEERFINLSKILCPYLAFIAKKPLHPEYLTFPGNVKIIKKGNNYYCPVKNKQLNEYSLCEFCVCKSIDELK.

Belongs to the UPF0305 family.

The polypeptide is UPF0305 protein MJ0646 (Methanocaldococcus jannaschii (strain ATCC 43067 / DSM 2661 / JAL-1 / JCM 10045 / NBRC 100440) (Methanococcus jannaschii)).